Consider the following 217-residue polypeptide: Cytidylate kinase (217 aa).

Residue 10-18 (GPAGAGKST) coordinates ATP.

This sequence belongs to the cytidylate kinase family. Type 1 subfamily.

Its subcellular location is the cytoplasm. It catalyses the reaction CMP + ATP = CDP + ADP. The catalysed reaction is dCMP + ATP = dCDP + ADP. The polypeptide is Cytidylate kinase (Clostridium botulinum (strain Okra / Type B1)).